The chain runs to 356 residues: tRNA N6-adenosine threonylcarbamoyltransferase (356 aa).

Histidine 116 and histidine 120 together coordinate Fe cation. Residues 139–143, aspartate 174, glycine 187, aspartate 191, and asparagine 281 each bind substrate; that span reads IVSGG. Aspartate 309 lines the Fe cation pocket.

The protein belongs to the KAE1 / TsaD family. Fe(2+) serves as cofactor.

It is found in the cytoplasm. It catalyses the reaction L-threonylcarbamoyladenylate + adenosine(37) in tRNA = N(6)-L-threonylcarbamoyladenosine(37) in tRNA + AMP + H(+). In terms of biological role, required for the formation of a threonylcarbamoyl group on adenosine at position 37 (t(6)A37) in tRNAs that read codons beginning with adenine. Is involved in the transfer of the threonylcarbamoyl moiety of threonylcarbamoyl-AMP (TC-AMP) to the N6 group of A37, together with TsaE and TsaB. TsaD likely plays a direct catalytic role in this reaction. The polypeptide is tRNA N6-adenosine threonylcarbamoyltransferase (Frankia alni (strain DSM 45986 / CECT 9034 / ACN14a)).